The chain runs to 98 residues: NADH-ubiquinone oxidoreductase chain 4L (98 aa).

3 helical membrane-spanning segments follow: residues 1 to 21 (MPYI…GMLI), 29 to 49 (SLLC…LTIL), and 61 to 81 (IILL…LVMV).

It belongs to the complex I subunit 4L family. As to quaternary structure, core subunit of respiratory chain NADH dehydrogenase (Complex I) which is composed of 45 different subunits.

The protein resides in the mitochondrion inner membrane. It catalyses the reaction a ubiquinone + NADH + 5 H(+)(in) = a ubiquinol + NAD(+) + 4 H(+)(out). Its function is as follows. Core subunit of the mitochondrial membrane respiratory chain NADH dehydrogenase (Complex I) which catalyzes electron transfer from NADH through the respiratory chain, using ubiquinone as an electron acceptor. Part of the enzyme membrane arm which is embedded in the lipid bilayer and involved in proton translocation. This Cephalopachus bancanus (Western tarsier) protein is NADH-ubiquinone oxidoreductase chain 4L (MT-ND4L).